An 83-amino-acid chain; its full sequence is uncharacterized protein (83 aa).

The next 2 helical transmembrane spans lie at F11 to L31 and W48 to M68.

The protein localises to the cell membrane. This is an uncharacterized protein from Bacillus subtilis (strain 168).